The primary structure comprises 417 residues: NADH-quinone oxidoreductase subunit D 1 (417 aa).

This sequence belongs to the complex I 49 kDa subunit family. NDH-1 is composed of 14 different subunits. Subunits NuoB, C, D, E, F, and G constitute the peripheral sector of the complex.

It is found in the cell membrane. The catalysed reaction is a quinone + NADH + 5 H(+)(in) = a quinol + NAD(+) + 4 H(+)(out). Its function is as follows. NDH-1 shuttles electrons from NADH, via FMN and iron-sulfur (Fe-S) centers, to quinones in the respiratory chain. The immediate electron acceptor for the enzyme in this species is believed to be ubiquinone. Couples the redox reaction to proton translocation (for every two electrons transferred, four hydrogen ions are translocated across the cytoplasmic membrane), and thus conserves the redox energy in a proton gradient. This chain is NADH-quinone oxidoreductase subunit D 1, found in Roseiflexus castenholzii (strain DSM 13941 / HLO8).